We begin with the raw amino-acid sequence, 354 residues long: Ferrochelatase (354 aa).

2 residues coordinate Fe cation: His214 and Glu295.

The protein belongs to the ferrochelatase family.

It localises to the cytoplasm. The enzyme catalyses heme b + 2 H(+) = protoporphyrin IX + Fe(2+). The protein operates within porphyrin-containing compound metabolism; protoheme biosynthesis; protoheme from protoporphyrin-IX: step 1/1. Catalyzes the ferrous insertion into protoporphyrin IX. The sequence is that of Ferrochelatase from Burkholderia lata (strain ATCC 17760 / DSM 23089 / LMG 22485 / NCIMB 9086 / R18194 / 383).